The primary structure comprises 675 residues: MTTSHMNGHVTEESDSEVKNVDLASPEEHQKHREMAVDCPGDLGTRMMPIRRSAQLERIRQQQEDMRRRREEEGKKQELDLNSSMRLKKLAQIPPKTGIDNPMFDTEEGIVLESPHYAVKILEIEDLFSSLKHIQHTLVDSQSQEDISLLLQLVQNKDFQNAFKIHNAITVHMNKASPPFPLISNAQDLAQEVQTVLKPVHHKEGQELTALLNTPHIQALLLAHDKVAEQEMQLEPITDERVYESIGQYGGETVKIVRIEKARDIPLGATVRNEMDSVIISRIVKGGAAEKSGLLHEGDEVLEINGIEIRGKDVNEVFDLLSDMHGTLTFVLIPSQQIKPPPAKETVIHVKAHFDYDPSDDPYVPCRELGLSFQKGDILHVISQEDPNWWQAYREGDEDNQPLAGLVPGKSFQQQREAMKQTIEEDKEPEKSGKLWCAKKNKKKRKKVLYNANKNDDYDNEEILTYEEMSLYHQPANRKRPIILIGPQNCGQNELRQRLMNKEKDRFASAVPHTTRSRRDQEVAGRDYHFVSRQAFEADIAAGKFIEHGEFEKNLYGTSIDSVRQVINSGKICLLSLRTQSLKTLRNSDLKPYIIFIAPPSQERLRALLAKEGKNPKPEELREIIEKTREMEQNNGHYFDTAIVNSDLDKAYQELLRLINKLDTEPQWVPSTWLR.

Disordered stretches follow at residues 1-34 (MTTS…KHRE) and 51-78 (RRSA…KKQE). The interval 1 to 345 (MTTSHMNGHV…QQIKPPPAKE (345 aa)) is required for the correct localization of PALS1 and PATJ at cell-cell contacts and the normal formation of tight junctions and adherens junctions. Basic and acidic residues-rich tracts occupy residues 10 to 34 (VTEE…KHRE) and 54 to 78 (AQLE…KKQE). A phosphoserine mark is found at Ser14 and Ser25. Residues 21 to 140 (VDLASPEEHQ…LKHIQHTLVD (120 aa)) form an interaction with PARD6B region. Residues Ser83 and Ser84 each carry the phosphoserine modification. L27 domains follow at residues 120–177 (KILE…NKAS) and 179–235 (PFPL…MQLE). The segment at 181-243 (PLISNAQDLA…LEPITDERVY (63 aa)) is interaction with LIN7C. The region spanning 256–336 (IVRIEKARDI…TLTFVLIPSQ (81 aa)) is the PDZ domain. One can recognise an SH3 domain in the interval 345 to 417 (ETVIHVKAHF…PGKSFQQQRE (73 aa)). Residues 479 to 660 (KRPIILIGPQ…AYQELLRLIN (182 aa)) form the Guanylate kinase-like domain. Residue 486 to 493 (GPQNCGQN) participates in ATP binding.

This sequence belongs to the MAGUK family. As to quaternary structure, heterodimer with MPP1. Forms a heterotrimeric complex composed of PALS1, LIN7B and PATJ; the N-terminal L27 domain of PALS1 interacts with the L27 domain of PATJ and the C-terminal L27 domain of PALS1 interacts with the L27 domain of LIN7B. Component of a complex composed of PALS1, CRB1 and MPP4. Component of a complex whose core is composed of ARHGAP17, AMOT, PALS1, PATJ and PARD3/PAR3. Component of a complex composed of PALS1, CRB1 and EPB41L5. Within the complex, interacts (via HOOK domain) with EPB41L5 (via FERM domain), and interacts with CRB1 (via intracellular domain). Component of a complex composed of PALS1, MPP3 and CRB1; PALS1 acts as a bridging protein between MPP3 (via guanylate kinase-like domain) and CRB1. Component of a complex composed of CRB3, PALS1 and PATJ. As part of the Crumbs complex; interacts with WWP1, the interaction is enhanced by AMOTL2 and facilitates WWP1 localization to the plasma membrane. The Crumbs complex promotes monoubiquitination of AMOTL2 by WWP1, which activates the Hippo signaling pathway. Interacts (via PDZ domain) with PATJ (via N-terminus). Interacts with EZR. Interacts (via PDZ domain) with CRB1 (via C-terminal ERLI motif). While the PDZ domain is sufficient for interaction with CRB1, the adjacent SH3 and guanylate kinase-like domains are likely to contribute to a high affinity interaction. Interacts with WWTR1/TAZ (via WW domain). Interacts with MPP7. Interacts (via PDZ domain) with CRB3 (via C-terminus). Interacts with LIN7C. Interacts with MPDZ. Interacts with PARD6B. Interacts with SC6A1. Interacts with CDH5; the interaction promotes PALS1 localization to cell junctions and is required for CDH5-mediated vascular lumen formation and endothelial cell. Interacts with NPHP1 (via coiled coil and SH3 domains). Interacts with NPHP4. Interacts with CRB2. (Microbial infection) Interacts (via PDZ domain) with human coronaviruses SARS-CoV and, probably, SARS-CoV-2 envelope small membrane protein E (via C-terminus); this inhibits the interaction between PALS1 and CRB3. As to expression, expressed at the outer limiting membrane in the retina (at protein level). Expressed in T lymphocytes (at protein level). Expressed in the kidney (at protein level).

It is found in the golgi apparatus. It localises to the cell membrane. The protein resides in the endomembrane system. The protein localises to the cell junction. Its subcellular location is the tight junction. It is found in the adherens junction. It localises to the cell projection. The protein resides in the axon. The protein localises to the perikaryon. Its subcellular location is the apical cell membrane. It is found in the endoplasmic reticulum-Golgi intermediate compartment. In terms of biological role, plays a role in tight junction biogenesis and in the establishment of cell polarity in epithelial cells. Also involved in adherens junction biogenesis by ensuring correct localization of the exocyst complex protein EXOC4/SEC8 which allows trafficking of adherens junction structural component CDH1 to the cell surface. Plays a role through its interaction with CDH5 in vascular lumen formation and endothelial membrane polarity. Required during embryonic and postnatal retinal development. Required for the maintenance of cerebellar progenitor cells in an undifferentiated proliferative state, preventing premature differentiation, and is required for cerebellar histogenesis, fissure formation, cerebellar layer organization and cortical development. Plays a role in neuronal progenitor cell survival, potentially via promotion of mTOR signaling. Plays a role in the radial and longitudinal extension of the myelin sheath in Schwann cells. May modulate SC6A1/GAT1-mediated GABA uptake by stabilizing the transporter. Plays a role in the T-cell receptor-mediated activation of NF-kappa-B. Required for localization of EZR to the apical membrane of parietal cells and may play a role in the dynamic remodeling of the apical cytoskeleton. Required for the normal polarized localization of the vesicular marker STX4. Required for the correct trafficking of the myelin proteins PMP22 and MAG. Involved in promoting phosphorylation and cytoplasmic retention of transcriptional coactivators YAP1 and WWTR1/TAZ which leads to suppression of TGFB1-dependent transcription of target genes such as CCN2/CTGF, SERPINE1/PAI1, SNAI1/SNAIL1 and SMAD7. Functionally, (Microbial infection) Acts as an interaction partner for human coronaviruses SARS-CoV and, probably, SARS-CoV-2 envelope protein E which results in delayed formation of tight junctions and disregulation of cell polarity. The sequence is that of Protein PALS1 from Homo sapiens (Human).